Here is a 481-residue protein sequence, read N- to C-terminus: Protein FIZZY-RELATED 3 (481 aa).

Residues 100 to 165 form a disordered region; the sequence is PAGGQGSASS…RKVPKTPHKV (66 aa). Over residues 125 to 136 the composition is skewed to low complexity; that stretch reads SNSSPSSPFSPS. Positions 154–163 are enriched in basic residues; sequence PPRKVPKTPH. WD repeat units lie at residues 172 to 209, 213 to 252, 255 to 292, 296 to 335, 338 to 380, 382 to 423, and 426 to 465; these read QDDFYLNVVDWSSQNVLAVGLGTCVYLWTASNSKVTKL, GPNDSVCSVQWTREGSYISIGTSHGQVQVWDGTQCKRVRT, GHQTRTGVLAWNSRILSSGSRDRNILQHDIRVQSDFVS, GHKSEVCGLKWSHDDRELASGGNDNQLLVWNNHSQQPILK, EHTA…QLNS, DTGS…KVAT, and GHSMRVLYLATSPDGQTIVTGAGDETLRFWNVFPSVKMQT.

This sequence belongs to the WD repeat CDC20/Fizzy family. Associates with the APC/C complex. Interacts with CDC20-1, CDC20-2, CYCA1-1, CYCA3-4, CYCB1-1 and CYCB1-2. Binds to GIG1 and PYM.

It functions in the pathway protein modification; protein ubiquitination. Its function is as follows. Activator protein that regulates the ubiquitin ligase activity and substrate specificity of the anaphase promoting complex/cyclosome (APC/C). This Arabidopsis thaliana (Mouse-ear cress) protein is Protein FIZZY-RELATED 3 (FZR3).